We begin with the raw amino-acid sequence, 407 residues long: Melanoma-associated antigen B6 (407 aa).

The interval methionine 1–glutamate 175 is disordered. Polar residues-rich tracts occupy residues threonine 18–glutamine 29, aspartate 57–glycine 71, proline 94–glycine 113, and proline 136–glycine 155. Residues valine 195–alanine 394 enclose the MAGE domain.

Expressed in testis. Not expressed in other normal tissues, but is expressed in tumors of different histological origins.

This is Melanoma-associated antigen B6 (MAGEB6) from Homo sapiens (Human).